Consider the following 1525-residue polypeptide: Receptor-type guanylate cyclase Gyc76C (1525 aa).

An N-terminal signal peptide occupies residues 1–19 (MTRWPFNLLLLLSVAVRDC). The Extracellular segment spans residues 20–493 (SNHRTVLTVG…KKDDTHYTST (474 aa)). N-linked (GlcNAc...) asparagine glycosylation is found at Asn74, Asn184, Asn222, Asn338, Asn383, Asn394, Asn416, Asn428, and Asn458. Residues 494 to 514 (VAAVVLGVLLFCSGVITMSIY) traverse the membrane as a helical segment. At 515-1525 (RKWKIELEIE…AAARDRESIV (1011 aa)) the chain is on the cytoplasmic side. Residues 547–824 (PSKVSLMSAQ…SVIRNRLKKM (278 aa)) enclose the Protein kinase domain. ATP is bound by residues 553-561 (MSAQSYGSR) and Lys581. The 131-residue stretch at 896–1026 (TIYFSDIVGF…DTVNTASRME (131 aa)) folds into the Guanylate cyclase domain. Residues Asp901, Ile902, and Asp945 each coordinate Mg(2+). Disordered regions lie at residues 1122–1168 (GSRR…NGLG), 1192–1217 (ETNE…LVRQ), and 1256–1308 (ESRS…VHSS). Residues 1147–1162 (ESPRMVSKRDRDRERP) show a composition bias toward basic and acidic residues. Residues 1202-1212 (GGSGGVSGSGS) are compositionally biased toward gly residues. Residues 1282–1308 (LSKNNSRSLDTGVSLISGNPNGEVHSS) are compositionally biased toward polar residues.

The protein belongs to the adenylyl cyclase class-4/guanylyl cyclase family. In terms of assembly, interacts with the semaphorin 1A receptor PlexA; PlexA enhances Gyc76C catalytic activity. Interacts with the PDZ domain-containing protein kermit; kermit increases cell surface expression of Gyc76C. In terms of tissue distribution, in the adult, widely distributed in the head and thorax with highest levels in the optic lobe and central brain and expression also detected in the retina. Expressed at similar levels in adult head and body. In females, highly expressed in oocytes with lower levels in the digestive tract. In mid-embryogenesis, enriched in the circular visceral mesoderm that overlies the migrating salivary gland and in the fat body that underlies the gland but at background levels in the gland itself. In late embryogenesis, detected in the mature salivary gland, in the somatic body wall muscles and the tendon cells to which the muscles attach, and in the constricting midgut. Also expressed in migrating tracheal cells at mid-embryogenesis and in the developed trachea at the end of embryogenesis with enrichment in the apical domains.

The protein localises to the cell membrane. It catalyses the reaction GTP = 3',5'-cyclic GMP + diphosphate. Guanylate cyclase involved in the production of the second messenger cGMP. Acts as a receptor for the NPLP1-4 peptide and modulates the innate immune IMD pathway in response to salt stress by inducing nuclear translocation of NF-kappa-B protein Rel which leads to increased expression of the antimicrobial peptide diptericin. Plays a role in Sema-1a-mediated axon repulsion which is required for the correct establishment of neuromuscular connectivity. Required in developing embryonic somatic muscle for correct patterning of ventral and lateral muscles and for localization of integrin beta-ps at developing dorsal muscle myotendinous junctions. Required for invagination, migration and lumen shape of the embryonic salivary gland by regulating the localization of the integrin-binding protein rhea/Talin to the visceral mesoderm surrounding the gland and maintaining the laminin matrix. Required in the developing wing to regulate extracellular matrix (ECM) organization by activating the cGMP-dependent protein kinase For which represses the activity of matrix metalloproteases such as Mmp2 and decreases ECM matrix reorganization. The chain is Receptor-type guanylate cyclase Gyc76C from Drosophila melanogaster (Fruit fly).